A 130-amino-acid polypeptide reads, in one-letter code: Phosphoribosyl-AMP cyclohydrolase (130 aa).

Residue aspartate 80 coordinates Mg(2+). Residue cysteine 81 coordinates Zn(2+). The Mg(2+) site is built by aspartate 82 and aspartate 84. Zn(2+) contacts are provided by cysteine 98 and cysteine 105.

This sequence belongs to the PRA-CH family. In terms of assembly, homodimer. Mg(2+) serves as cofactor. It depends on Zn(2+) as a cofactor.

Its subcellular location is the cytoplasm. The enzyme catalyses 1-(5-phospho-beta-D-ribosyl)-5'-AMP + H2O = 1-(5-phospho-beta-D-ribosyl)-5-[(5-phospho-beta-D-ribosylamino)methylideneamino]imidazole-4-carboxamide. It participates in amino-acid biosynthesis; L-histidine biosynthesis; L-histidine from 5-phospho-alpha-D-ribose 1-diphosphate: step 3/9. Functionally, catalyzes the hydrolysis of the adenine ring of phosphoribosyl-AMP. This Oleidesulfovibrio alaskensis (strain ATCC BAA-1058 / DSM 17464 / G20) (Desulfovibrio alaskensis) protein is Phosphoribosyl-AMP cyclohydrolase.